The primary structure comprises 785 residues: Cation/H(+) antiporter 1 (785 aa).

12 helical membrane passes run Leu-19–Phe-39, Gly-44–Ile-64, Tyr-79–Ile-99, Ile-112–Phe-132, Phe-143–Ile-163, Leu-179–Leu-199, Phe-201–Ile-221, Tyr-240–Ile-260, Tyr-294–Val-314, Leu-323–Ala-343, Gln-352–Leu-372, and Met-389–Leu-409.

Belongs to the monovalent cation:proton antiporter 2 (CPA2) transporter (TC 2.A.37) family. CHX (TC 2.A.37.4) subfamily. As to expression, specifically expressed in pollen.

The protein localises to the membrane. Its function is as follows. May operate as a cation/H(+) antiporter. This chain is Cation/H(+) antiporter 1 (CHX1), found in Arabidopsis thaliana (Mouse-ear cress).